The chain runs to 878 residues: Staphylococcal nuclease domain-containing protein 1 (878 aa).

TNase-like domains are found at residues 3–142 (QYVS…IWGP) and 167–312 (KKLN…IWKN). Ser316 carries the phosphoserine modification. 2 TNase-like domains span residues 326 to 464 (KDYS…MWSG) and 493 to 626 (RKLS…MWHD). Residues 695-755 (KINVGMNVAA…SSLPDTYTKL (61 aa)) enclose the Tudor domain.

The protein resides in the cytoplasm. It localises to the cytosol. This is Staphylococcal nuclease domain-containing protein 1 from Schizosaccharomyces pombe (strain 972 / ATCC 24843) (Fission yeast).